A 288-amino-acid polypeptide reads, in one-letter code: ATP synthase gamma chain (288 aa).

The protein belongs to the ATPase gamma chain family. In terms of assembly, F-type ATPases have 2 components, CF(1) - the catalytic core - and CF(0) - the membrane proton channel. CF(1) has five subunits: alpha(3), beta(3), gamma(1), delta(1), epsilon(1). CF(0) has three main subunits: a, b and c.

The protein resides in the cell inner membrane. Produces ATP from ADP in the presence of a proton gradient across the membrane. The gamma chain is believed to be important in regulating ATPase activity and the flow of protons through the CF(0) complex. This is ATP synthase gamma chain from Rickettsia typhi (strain ATCC VR-144 / Wilmington).